Consider the following 1059-residue polypeptide: Microtubule-associated protein 1S (1059 aa).

Residues Met-1 to Ser-797 are necessary for the microtubule-organizing center localization. Phosphoserine is present on residues Ser-321 and Ser-472. Disordered stretches follow at residues Pro-461–His-733 and Val-751–Pro-942. 2 stretches are compositionally biased toward basic and acidic residues: residues Gly-466–Gly-486 and Pro-494–Lys-530. A compositionally biased stretch (polar residues) spans Ser-547–Gln-557. Residue Ser-582 is modified to Phosphoserine. The segment covering Ala-591–Ser-603 has biased composition (low complexity). Thr-638 bears the Phosphothreonine mark. Ser-640 is modified (phosphoserine). The span at Glu-642–Glu-652 shows a compositional bias: basic and acidic residues. Residues Ser-655 and Ser-657 each carry the phosphoserine modification. Residues Pro-666–Phe-1059 are necessary for interaction with RASSF1 isoform A and isoform C. Residues Pro-670–Pro-680 show a composition bias toward low complexity. Residues Glu-714–Glu-966 are necessary for association with microtubules. Phosphoserine occurs at positions 731 and 759. Positions Ser-759 to Arg-769 are enriched in low complexity. A compositionally biased stretch (polar residues) spans Pro-783–Asp-796. Phosphoserine is present on Ser-809. Over residues Pro-825–Asp-836 the composition is skewed to pro residues. Composition is skewed to low complexity over residues Ala-873–Lys-887 and Thr-923–Pro-936. The segment at Ala-960 to Phe-1059 is necessary for association with actin. Residues Phe-967–Ala-991 are necessary for the mitochondrial aggregation and genome destruction.

The protein belongs to the MAP1 family. As to quaternary structure, heterodimer of a heavy and a light chain. Interacts with microtubules and actin. Both MAP1S heavy and light chains interact with microtubules. MAP1S light chain interacts with actin. Interacts (via C-terminus) with GAN (via Kelch domains). Interacts with ESR1, LRPPRC, RASSF1 isoform A and isoform C, microtubules and VCY2. Interacts with WDR47 (via N-terminus of light chain). Expressed in neurons (at protein level). Expressed in spermatocytes, spermatids and spermatozoa. Expressed in the cerebral cortex. Highly expressed in testis. Moderately expressed in the brain, colon, heart, kidney, liver, lung, placenta, small intestine, spleen and stomach. Weakly expressed in muscle.

The protein resides in the nucleus. It localises to the cytoplasm. Its subcellular location is the cytosol. It is found in the cytoskeleton. The protein localises to the spindle. Microtubule-associated protein that mediates aggregation of mitochondria resulting in cell death and genomic destruction (MAGD). Plays a role in anchoring the microtubule organizing center to the centrosomes. Binds to DNA. Plays a role in apoptosis. Involved in the formation of microtubule bundles. The polypeptide is Microtubule-associated protein 1S (MAP1S) (Homo sapiens (Human)).